Consider the following 247-residue polypeptide: Triosephosphate isomerase (247 aa).

9–11 (NWK) is a substrate binding site. H93 (electrophile) is an active-site residue. Catalysis depends on E163, which acts as the Proton acceptor. Residues G169, S209, and 230–231 (GG) each bind substrate.

It belongs to the triosephosphate isomerase family. Homodimer.

The protein localises to the cytoplasm. The enzyme catalyses D-glyceraldehyde 3-phosphate = dihydroxyacetone phosphate. Its pathway is carbohydrate biosynthesis; gluconeogenesis. The protein operates within carbohydrate degradation; glycolysis; D-glyceraldehyde 3-phosphate from glycerone phosphate: step 1/1. Functionally, involved in the gluconeogenesis. Catalyzes stereospecifically the conversion of dihydroxyacetone phosphate (DHAP) to D-glyceraldehyde-3-phosphate (G3P). The sequence is that of Triosephosphate isomerase from Dinoroseobacter shibae (strain DSM 16493 / NCIMB 14021 / DFL 12).